The sequence spans 514 residues: Major facilitator superfamily domain-containing protein 4A (514 aa).

5 consecutive transmembrane segments (helical) span residues 19–39 (LTYWSVFFSFGLCIAFLGPTL), 53–73 (ISWVFLSQQLCLLLGSALGGV), 82–102 (LWALFTSSLAISLVFAVIPFC), 107–127 (VLALVMALAGLAMGCIDTVAN), and 139–159 (AVFLQVLHFFVGFGALLSPLI). N-linked (GlcNAc...) asparagine glycans are attached at residues Asn177 and Asn203. A run of 7 helical transmembrane segments spans residues 221 to 241 (YAFWIMALINLPVPMAVLMLL), 307 to 327 (FFAIHITAALVLFMTDGLTGA), 347 to 367 (VAGYLPSLFWGFITLGRLLSI), 376 to 396 (ATMVFINVVGVVVTFLVLLIF), 400 to 420 (VVFLFVGTASLGLFLSSTFPS), 438 to 458 (VLVTGAGVGEMVLQMLVGSIF), and 466 to 486 (FLVCGVIFGCLAFTFYILLLF).

This sequence belongs to the major facilitator superfamily.

Its subcellular location is the membrane. The protein is Major facilitator superfamily domain-containing protein 4A (MFSD4A) of Pongo abelii (Sumatran orangutan).